Here is a 316-residue protein sequence, read N- to C-terminus: Ribosomal protein L11 methyltransferase (316 aa).

S-adenosyl-L-methionine-binding residues include Thr-160, Gly-181, Asp-203, and Asn-246.

Belongs to the methyltransferase superfamily. PrmA family.

The protein resides in the cytoplasm. It catalyses the reaction L-lysyl-[protein] + 3 S-adenosyl-L-methionine = N(6),N(6),N(6)-trimethyl-L-lysyl-[protein] + 3 S-adenosyl-L-homocysteine + 3 H(+). Functionally, methylates ribosomal protein L11. The chain is Ribosomal protein L11 methyltransferase from Heliobacterium modesticaldum (strain ATCC 51547 / Ice1).